A 350-amino-acid polypeptide reads, in one-letter code: tRNA uridine(34) hydroxylase (350 aa).

Positions 146-240 (DDPDALFIDM…YARKAREQGL (95 aa)) constitute a Rhodanese domain. C200 functions as the Cysteine persulfide intermediate in the catalytic mechanism.

It belongs to the TrhO family.

It catalyses the reaction uridine(34) in tRNA + AH2 + O2 = 5-hydroxyuridine(34) in tRNA + A + H2O. Catalyzes oxygen-dependent 5-hydroxyuridine (ho5U) modification at position 34 in tRNAs, the first step in 5-carboxymethoxyuridine (cmo5U) biosynthesis. May be part of an alternate pathway, which is able to bypass cmo5U biogenesis in a subset of tRNAs under aerobic conditions. The chain is tRNA uridine(34) hydroxylase from Escherichia coli O9:H4 (strain HS).